Here is a 458-residue protein sequence, read N- to C-terminus: Zinc finger protein 239 (458 aa).

Residue Lys-108 forms a Glycyl lysine isopeptide (Lys-Gly) (interchain with G-Cter in SUMO2) linkage. The residue at position 191 (Ser-191) is a Phosphoserine. C2H2-type zinc fingers lie at residues 207-229 (YECSQCGKNFSQSSELLLHQRDH), 235-257 (YKCEQCGKGFTRSSSLLIHQAVH), 263-285 (YKCDKCGKGFTRSSSLLIHHAVH), 291-313 (YKCDKCGKGFSQSSKLHIHQRVH), 319-341 (YECEECGMSFSQRSNLHIHQRVH), 347-369 (YKCGECGKGFSQSSNLHIHRCIH), 375-397 (YQCYECGKGFSQSPDLRIHLRVH), 403-425 (YHCGKCGKGFSQSSKLLIHQRVH), and 431-453 (YECSKCGKGFSQSSNLHIHQRVH).

Belongs to the krueppel C2H2-type zinc-finger protein family.

The protein localises to the nucleus. Its function is as follows. May be involved in transcriptional regulation. This Pongo abelii (Sumatran orangutan) protein is Zinc finger protein 239 (ZNF239).